The sequence spans 483 residues: SWI/SNF-related matrix-associated actin-dependent regulator of chromatin subfamily D member 3 (483 aa).

Ala2 carries the post-translational modification N-acetylalanine. Residues Arg27–Lys102 are disordered. The span at Gln78–Val88 shows a compositional bias: low complexity. Ser178 carries the phosphoserine modification. In terms of domain architecture, SWIB/MDM2 spans Tyr258 to Pro335.

This sequence belongs to the SMARCD family. In terms of assembly, component of the multiprotein chromatin-remodeling complexes SWI/SNF: SWI/SNF-A (BAF), SWI/SNF-B (PBAF) and related complexes. The canonical complex contains a catalytic subunit (either SMARCA4/BRG1/BAF190A or SMARCA2/BRM/BAF190B) and at least SMARCE1, ACTL6A/BAF53, SMARCC1/BAF155, SMARCC2/BAF170, and SMARCB1/SNF5/BAF47. Other subunits specific to each of the complexes may also be present permitting several possible combinations developmentally and tissue specific. Component of the BAF complex, which includes at least actin (ACTB), ARID1A/BAF250A, ARID1B/BAF250B, SMARCA2/BRM, SMARCA4/BRG1/BAF190A, ACTL6A/BAF53, ACTL6B/BAF53B, SMARCE1/BAF57, SMARCC1/BAF155, SMARCC2/BAF170, SMARCB1/SNF5/INI1, and one or more SMARCD1/BAF60A, SMARCD2/BAF60B, or SMARCD3/BAF60C. In muscle cells, the BAF complex also contains DPF3. Component of neural progenitors-specific chromatin remodeling complex (npBAF complex) composed of at least, ARID1A/BAF250A or ARID1B/BAF250B, SMARCD1/BAF60A, SMARCD3/BAF60C, SMARCA2/BRM/BAF190B, SMARCA4/BRG1/BAF190A, SMARCB1/BAF47, SMARCC1/BAF155, SMARCE1/BAF57, SMARCC2/BAF170, PHF10/BAF45A, ACTL6A/BAF53A and actin. Component of neuron-specific chromatin remodeling complex (nBAF complex) composed of at least, ARID1A/BAF250A or ARID1B/BAF250B, SMARCD1/BAF60A, SMARCD3/BAF60C, SMARCA2/BRM/BAF190B, SMARCA4/BRG1/BAF190A, SMARCB1/BAF47, SMARCC1/BAF155, SMARCE1/BAF57, SMARCC2/BAF170, DPF1/BAF45B, DPF3/BAF45C, ACTL6B/BAF53B and actin. May be a component of the SWI/SNF-B (PBAF) chromatin remodeling complex, at least composed of SMARCA4/BRG1, SMARCB1/BAF47/SNF5, ACTL6A/BAF53A or ACTL6B/BAF53B, SMARCE1/BAF57, SMARCD1/BAF60A, SMARCD2/BAF60B, perhaps SMARCD3/BAF60C, SMARCC1/BAF155, SMARCC2/BAF170, PBRM1/BAF180, ARID2/BAF200 and actin. Component of SWI/SNF (GBAF) subcomplex, which includes at least BICRA or BICRAL (mutually exclusive), BRD9, SS18, SMARCA2/BRM, SMARCA4/BRG1/BAF190A, ACTL6A/BAF53, SMARCC1/BAF155, and SMARCD1/BAF60A. Interacts with SMARCA4/BRG1/BAF190A. The precise distribution of the related SMARCD1, SMARCD2 and SMARCD3 proteins among these and other SWI/SNF nucleosome-remodeling complexes is not fully known. May allow recruitment of SWI/SNF containing complexes specifically to promoters where these factors are located. Also interacts with several nuclear receptors including PPARG/NR1C3, RXRA/NR1F1, ESR1, NR5A1, NR5A2/LRH1 and other transcriptional activators including the HLH protein SREBF1/SREBP1 and the homeobox protein PBX1. Interacts with PRDM1/BLIMP1. Ubiquitously expressed.

The protein resides in the nucleus. Involved in transcriptional activation and repression of select genes by chromatin remodeling (alteration of DNA-nucleosome topology). Component of SWI/SNF chromatin remodeling complexes that carry out key enzymatic activities, changing chromatin structure by altering DNA-histone contacts within a nucleosome in an ATP-dependent manner. Stimulates nuclear receptor mediated transcription. Belongs to the neural progenitors-specific chromatin remodeling complex (npBAF complex) and the neuron-specific chromatin remodeling complex (nBAF complex). During neural development a switch from a stem/progenitor to a postmitotic chromatin remodeling mechanism occurs as neurons exit the cell cycle and become committed to their adult state. The transition from proliferating neural stem/progenitor cells to postmitotic neurons requires a switch in subunit composition of the npBAF and nBAF complexes. As neural progenitors exit mitosis and differentiate into neurons, npBAF complexes which contain ACTL6A/BAF53A and PHF10/BAF45A, are exchanged for homologous alternative ACTL6B/BAF53B and DPF1/BAF45B or DPF3/BAF45C subunits in neuron-specific complexes (nBAF). The npBAF complex is essential for the self-renewal/proliferative capacity of the multipotent neural stem cells. The nBAF complex along with CREST plays a role regulating the activity of genes essential for dendrite growth. This chain is SWI/SNF-related matrix-associated actin-dependent regulator of chromatin subfamily D member 3 (Smarcd3), found in Mus musculus (Mouse).